A 123-amino-acid polypeptide reads, in one-letter code: MALLKISVVVPEGEVYTGEVKSVVLPGVEGEFGVLYGHSNMITLLQAGVIEIETENQKEHIAINWGYAEVTKERVDILADGAVFIKKESDDRDDAISRAKKLLEDASSDRLAVSSVLAKIESL.

The protein belongs to the ATPase epsilon chain family. F-type ATPases have 2 components, CF(1) - the catalytic core - and CF(0) - the membrane proton channel. CF(1) has five subunits: alpha(3), beta(3), gamma(1), delta(1), epsilon(1). CF(0) has three main subunits: a, b and c.

The protein localises to the cell inner membrane. In terms of biological role, produces ATP from ADP in the presence of a proton gradient across the membrane. This is ATP synthase epsilon chain from Helicobacter pylori (strain G27).